Consider the following 203-residue polypeptide: Small ribosomal subunit protein uS5 (203 aa).

One can recognise an S5 DRBM domain in the interval 51–114; that stretch reads LEDEVLDITM…ENAKLNVVRI (64 aa).

It belongs to the universal ribosomal protein uS5 family. Part of the 30S ribosomal subunit. Contacts protein S4.

Functionally, with S4 and S12 plays an important role in translational accuracy. This Methanothrix thermoacetophila (strain DSM 6194 / JCM 14653 / NBRC 101360 / PT) (Methanosaeta thermophila) protein is Small ribosomal subunit protein uS5.